The following is a 279-amino-acid chain: Phosphate import ATP-binding protein PstB 1 (279 aa).

The ABC transporter domain occupies 26 to 274 (VMDCKLDKIF…PREQLTSDYI (249 aa)). 59–66 (GPSGCGKS) lines the ATP pocket.

It belongs to the ABC transporter superfamily. Phosphate importer (TC 3.A.1.7) family. The complex is composed of two ATP-binding proteins (PstB), two transmembrane proteins (PstC and PstA) and a solute-binding protein (PstS).

It is found in the cell inner membrane. It carries out the reaction phosphate(out) + ATP + H2O = ADP + 2 phosphate(in) + H(+). Functionally, part of the ABC transporter complex PstSACB involved in phosphate import. Responsible for energy coupling to the transport system. This chain is Phosphate import ATP-binding protein PstB 1, found in Pseudomonas putida (strain ATCC 47054 / DSM 6125 / CFBP 8728 / NCIMB 11950 / KT2440).